Here is a 462-residue protein sequence, read N- to C-terminus: tRNA(Ile2) 2-agmatinylcytidine synthetase TiaS (462 aa).

It belongs to the TiaS family.

It localises to the cytoplasm. It carries out the reaction cytidine(34) in tRNA(Ile2) + agmatine + ATP + H2O = 2-agmatinylcytidine(34) in tRNA(Ile2) + AMP + 2 phosphate + 2 H(+). Functionally, ATP-dependent agmatine transferase that catalyzes the formation of 2-agmatinylcytidine (agm2C) at the wobble position (C34) of tRNA(Ile2), converting the codon specificity from AUG to AUA. In Haloquadratum walsbyi (strain DSM 16790 / HBSQ001), this protein is tRNA(Ile2) 2-agmatinylcytidine synthetase TiaS.